We begin with the raw amino-acid sequence, 80 residues long: Adipogenin (80 aa).

Residues 14-34 (FSFLVFWFCLPVGLLLLLIIW) form a helical membrane-spanning segment.

The protein belongs to the adipogenin family.

Its subcellular location is the membrane. It localises to the nucleus. Plays a role in stimulating adipocyte differentiation and development. The sequence is that of Adipogenin from Homo sapiens (Human).